We begin with the raw amino-acid sequence, 285 residues long: MSQTPEARTRDNQTRQIQESVNNVEKHFGELCQIFAGYVRKTARLRDKADLLVREVNTYADTETPTLKHGLKNFADEFAKLQDYRQAEVERLESRVVEPLKSYGGIIKLKREDLKVTLSARNREAKQMAQLEKTRQRNPSDRQIISQAETELQRATMDAARISQQLEETIDNFEKQKIKDIKKLFAEFVTIEMVFHGKALEVLTAAYQHIQDIDEEEDLEVFRNSLHPPDFQSRLDIVRANSRSGSTSRAPSVISQPPGNRQKNRMEDDEDGEDDNDENSTEDEN.

Residues 1–48 (MSQTPEARTRDNQTRQIQESVNNVEKHFGELCQIFAGYVRKTARLRDK) constitute a mitochondrion transit peptide. The segment at 11–221 (DNQTRQIQES…DIDEEEDLEV (211 aa)) is BAR-like. Residues 142–184 (RQIISQAETELQRATMDAARISQQLEETIDNFEKQKIKDIKKL) are a coiled coil. The segment covering 241–261 (NSRSGSTSRAPSVISQPPGNR) has biased composition (polar residues). The disordered stretch occupies residues 241–285 (NSRSGSTSRAPSVISQPPGNRQKNRMEDDEDGEDDNDENSTEDEN). The span at 267–285 (EDDEDGEDDNDENSTEDEN) shows a compositional bias: acidic residues.

The protein belongs to the CIBAR family.

The protein resides in the cytoplasm. The protein localises to the cytoskeleton. It localises to the microtubule organizing center. It is found in the centrosome. Its subcellular location is the centriole. The protein resides in the cell projection. The protein localises to the cilium. It localises to the nucleus. It is found in the mitochondrion inner membrane. Its subcellular location is the flagellum. Its function is as follows. Plays a critical role in regulating mitochondrial ultrastructure and function by maintaining the integrity of mitochondrial morphology, particularly the organization of cristae. Plays a crucial role in ciliogenesis. Plays a key role in the correct positioning of the annulus, a septin-based ring structure in the sperm flagellum, serving both as a physical barrier and a membrane diffusion barrier that separates the midpiece (MP) from the principal piece (PP). The sequence is that of CBY1-interacting BAR domain-containing protein 1-B from Xenopus laevis (African clawed frog).